The primary structure comprises 273 residues: Fos-related antigen 1 (273 aa).

2 disordered regions span residues methionine 1–serine 46 and glycine 60–arginine 114. Low complexity predominate over residues glutamate 7–glutamine 35. The region spanning glutamate 105–histidine 168 is the bZIP domain. Residues arginine 107 to lysine 127 are basic motif. The leucine-zipper stretch occupies residues leucine 133–leucine 161. A compositionally biased stretch (basic and acidic residues) spans arginine 169–proline 182. Residues arginine 169 to leucine 273 are disordered. Composition is skewed to low complexity over residues leucine 217–leucine 235 and serine 254–leucine 273. Residue serine 267 is modified to Phosphoserine.

Belongs to the bZIP family. Fos subfamily. In terms of assembly, heterodimer. Interacts with the BAF multiprotein chromatin-remodeling complex subunits SMARCB1 and SMARCD1. Interacts with ARID1A and JUN.

The protein localises to the nucleus. The chain is Fos-related antigen 1 (Fosl1) from Mus musculus (Mouse).